We begin with the raw amino-acid sequence, 355 residues long: Dual-specificity RNA methyltransferase RlmN (355 aa).

Residue Glu-86 is the Proton acceptor of the active site. Positions 105-338 (KEARYTVCVS…CTIRESKGLD (234 aa)) constitute a Radical SAM core domain. An intrachain disulfide couples Cys-112 to Cys-343. Residues Cys-119, Cys-123, and Cys-126 each contribute to the [4Fe-4S] cluster site. S-adenosyl-L-methionine-binding positions include 169 to 170 (GE), Ser-201, 224 to 226 (SLH), and Asn-300. The active-site S-methylcysteine intermediate is the Cys-343.

It belongs to the radical SAM superfamily. RlmN family. [4Fe-4S] cluster is required as a cofactor.

The protein resides in the cytoplasm. The catalysed reaction is adenosine(2503) in 23S rRNA + 2 reduced [2Fe-2S]-[ferredoxin] + 2 S-adenosyl-L-methionine = 2-methyladenosine(2503) in 23S rRNA + 5'-deoxyadenosine + L-methionine + 2 oxidized [2Fe-2S]-[ferredoxin] + S-adenosyl-L-homocysteine. It carries out the reaction adenosine(37) in tRNA + 2 reduced [2Fe-2S]-[ferredoxin] + 2 S-adenosyl-L-methionine = 2-methyladenosine(37) in tRNA + 5'-deoxyadenosine + L-methionine + 2 oxidized [2Fe-2S]-[ferredoxin] + S-adenosyl-L-homocysteine. Specifically methylates position 2 of adenine 2503 in 23S rRNA and position 2 of adenine 37 in tRNAs. m2A2503 modification seems to play a crucial role in the proofreading step occurring at the peptidyl transferase center and thus would serve to optimize ribosomal fidelity. This is Dual-specificity RNA methyltransferase RlmN from Nitratiruptor sp. (strain SB155-2).